A 231-amino-acid chain; its full sequence is Quercetin 2,3-dioxygenase (231 aa).

Residues histidine 57, histidine 59, histidine 101, and glutamate 103 each coordinate a divalent metal cation.

Belongs to the pirin family. The cofactor is Zn(2+). It depends on Co(2+) as a cofactor. Fe(2+) is required as a cofactor.

It carries out the reaction quercetin + O2 = 2-(3,4-dihydroxybenzoyloxy)-4,6-dihydroxybenzoate + CO. It functions in the pathway flavonoid metabolism; quercetin degradation. With respect to regulation, inhibited by kojic acid, sodium diethyldithiocarbamate and 1,10-phenanthroline monohydrochloride. Has quercetin 2,3-dioxygenase activity in vitro. Its physiological role is unknown; however, may provide a mechanism that would avoid inhibition of key cellular proteins, such as DNA gyrase, by quercetin. The sequence is that of Quercetin 2,3-dioxygenase (yhhW) from Escherichia coli (strain K12).